An 88-amino-acid polypeptide reads, in one-letter code: MANTAQALKRIRQTNKARAQNASQRSTIRTVMKKFLKAIEAKDIATAEQEFSTAASLLDRAAQKHIIHKNKASRLKSRMHAKKKALVA.

Positions 1 to 25 are disordered; the sequence is MANTAQALKRIRQTNKARAQNASQR. A compositionally biased stretch (polar residues) spans 16-25; the sequence is KARAQNASQR.

It belongs to the bacterial ribosomal protein bS20 family.

Its function is as follows. Binds directly to 16S ribosomal RNA. This Dichelobacter nodosus (strain VCS1703A) protein is Small ribosomal subunit protein bS20.